The following is a 471-amino-acid chain: Glutamate--tRNA ligase (471 aa).

Positions 9–19 (PSPTGYLHVGG) match the 'HIGH' region motif. Zn(2+) is bound by residues cysteine 98, cysteine 100, cysteine 125, and aspartate 127. The 'KMSKS' region signature appears at 237–241 (KLSKR). Residue lysine 240 participates in ATP binding.

It belongs to the class-I aminoacyl-tRNA synthetase family. Glutamate--tRNA ligase type 1 subfamily. Monomer. The cofactor is Zn(2+).

The protein resides in the cytoplasm. It catalyses the reaction tRNA(Glu) + L-glutamate + ATP = L-glutamyl-tRNA(Glu) + AMP + diphosphate. Functionally, catalyzes the attachment of glutamate to tRNA(Glu) in a two-step reaction: glutamate is first activated by ATP to form Glu-AMP and then transferred to the acceptor end of tRNA(Glu). The polypeptide is Glutamate--tRNA ligase (Yersinia pseudotuberculosis serotype IB (strain PB1/+)).